A 369-amino-acid polypeptide reads, in one-letter code: 4-hydroxy-3-methylbut-2-en-1-yl diphosphate synthase (flavodoxin) (369 aa).

Residues C268, C271, C303, and E310 each coordinate [4Fe-4S] cluster.

The protein belongs to the IspG family. [4Fe-4S] cluster is required as a cofactor.

The catalysed reaction is (2E)-4-hydroxy-3-methylbut-2-enyl diphosphate + oxidized [flavodoxin] + H2O + 2 H(+) = 2-C-methyl-D-erythritol 2,4-cyclic diphosphate + reduced [flavodoxin]. It participates in isoprenoid biosynthesis; isopentenyl diphosphate biosynthesis via DXP pathway; isopentenyl diphosphate from 1-deoxy-D-xylulose 5-phosphate: step 5/6. In terms of biological role, converts 2C-methyl-D-erythritol 2,4-cyclodiphosphate (ME-2,4cPP) into 1-hydroxy-2-methyl-2-(E)-butenyl 4-diphosphate. In Exiguobacterium sibiricum (strain DSM 17290 / CCUG 55495 / CIP 109462 / JCM 13490 / 255-15), this protein is 4-hydroxy-3-methylbut-2-en-1-yl diphosphate synthase (flavodoxin).